Consider the following 336-residue polypeptide: Glycerol-3-phosphate dehydrogenase [NAD(P)+] (336 aa).

NADPH contacts are provided by Ser11, Trp12, Arg32, Arg33, and Lys110. Positions 110 and 140 each coordinate sn-glycerol 3-phosphate. Ala144 is a binding site for NADPH. Sn-glycerol 3-phosphate contacts are provided by Lys195, Asp248, Ser258, Arg259, and Asn260. The active-site Proton acceptor is the Lys195. Position 259 (Arg259) interacts with NADPH. Residues Val284 and Glu286 each coordinate NADPH.

It belongs to the NAD-dependent glycerol-3-phosphate dehydrogenase family.

Its subcellular location is the cytoplasm. It carries out the reaction sn-glycerol 3-phosphate + NAD(+) = dihydroxyacetone phosphate + NADH + H(+). The catalysed reaction is sn-glycerol 3-phosphate + NADP(+) = dihydroxyacetone phosphate + NADPH + H(+). Its pathway is membrane lipid metabolism; glycerophospholipid metabolism. Catalyzes the reduction of the glycolytic intermediate dihydroxyacetone phosphate (DHAP) to sn-glycerol 3-phosphate (G3P), the key precursor for phospholipid synthesis. The polypeptide is Glycerol-3-phosphate dehydrogenase [NAD(P)+] (Nocardia farcinica (strain IFM 10152)).